We begin with the raw amino-acid sequence, 218 residues long: DNA-binding protein HU 2 (218 aa).

The segment at 1 to 91 (MNKAQLVEAI…QGFKDLVSGS (91 aa)) is bacterial histone-like domain. The disordered stretch occupies residues 101 to 218 (VKKAPKGSLS…TAKKATARKK (118 aa)). Residues 118-218 (KAAGKKAAAK…TAKKATARKK (101 aa)) are degenerate repeats region. Over residues 127–161 (KKATGAAKKTTGAAKKTSAAAKKTTAKKTTGAAKT) the composition is skewed to low complexity. Basic residues predominate over residues 162–172 (TAKKTTAKKSA). Residues 173-182 (AKTTTAAAKK) show a composition bias toward low complexity. A compositionally biased stretch (basic residues) spans 183–218 (TAAKKAPAKKATAKKAPAKKSTARKTTAKKATARKK).

The protein belongs to the bacterial histone-like protein family. Long actinobacterial subfamily. In terms of assembly, homodimer.

Its subcellular location is the cytoplasm. The protein localises to the nucleoid. Its function is as follows. Histone-like DNA-binding protein which is capable of wrapping DNA to stabilize it, and thus to prevent its denaturation under extreme environmental conditions. In Streptomyces coelicolor (strain ATCC BAA-471 / A3(2) / M145), this protein is DNA-binding protein HU 2 (hup2).